The primary structure comprises 341 residues: Pyrophosphate--fructose 6-phosphate 1-phosphotransferase (341 aa).

G10 provides a ligand contact to diphosphate. E103 lines the Mg(2+) pocket. Residues T125–D127, R162, M169–R171, E221, R265, and H271–R274 each bind substrate. D127 functions as the Proton acceptor in the catalytic mechanism.

This sequence belongs to the phosphofructokinase type A (PFKA) family. Mixed-substrate PFK group III subfamily. As to quaternary structure, homotetramer. It depends on Mg(2+) as a cofactor.

It localises to the cytoplasm. The catalysed reaction is beta-D-fructose 6-phosphate + diphosphate = beta-D-fructose 1,6-bisphosphate + phosphate + H(+). It functions in the pathway carbohydrate degradation; glycolysis; D-glyceraldehyde 3-phosphate and glycerone phosphate from D-glucose: step 3/4. With respect to regulation, non-allosteric. Functionally, catalyzes the phosphorylation of D-fructose 6-phosphate, the first committing step of glycolysis. Uses inorganic phosphate (PPi) as phosphoryl donor instead of ATP like common ATP-dependent phosphofructokinases (ATP-PFKs), which renders the reaction reversible, and can thus function both in glycolysis and gluconeogenesis. Consistently, PPi-PFK can replace the enzymes of both the forward (ATP-PFK) and reverse (fructose-bisphosphatase (FBPase)) reactions. This chain is Pyrophosphate--fructose 6-phosphate 1-phosphotransferase, found in Amycolatopsis methanolica.